A 548-amino-acid chain; its full sequence is ComP-specific O-oligosaccharyltransferase (548 aa).

12 helical membrane passes run 8 to 28 (IKNY…IIPN), 32 to 52 (LSST…LLTV), 68 to 88 (WFLF…IYFF), 91 to 111 (FFFS…GFNE), 119 to 139 (IVKK…LIAI), 164 to 184 (LGQP…LCYL), 189 to 209 (SLNN…NVMT), 213 to 233 (SAWI…QKKI), 239 to 259 (IFFN…FNLI), 331 to 351 (MLWN…CFLI), 363 to 383 (LFLF…YPFA), and 418 to 438 (TLFL…VLDI).

It belongs to the PglL O-oligosaccharyltransferase family.

Its subcellular location is the cell membrane. Its function is as follows. Specifically catalyzes the glycosylation of the pilin-like competence factor ComP. This is ComP-specific O-oligosaccharyltransferase from Acinetobacter baylyi (strain ATCC 33305 / BD413 / ADP1).